The sequence spans 325 residues: Beta-ketoacyl-[acyl-carrier-protein] synthase III (325 aa).

Residues C119 and H252 contribute to the active site. Positions 253–257 (QANIR) are ACP-binding. N282 is an active-site residue.

Belongs to the thiolase-like superfamily. FabH family. In terms of assembly, homodimer.

It localises to the cytoplasm. The enzyme catalyses malonyl-[ACP] + acetyl-CoA + H(+) = 3-oxobutanoyl-[ACP] + CO2 + CoA. The protein operates within lipid metabolism; fatty acid biosynthesis. Functionally, catalyzes the condensation reaction of fatty acid synthesis by the addition to an acyl acceptor of two carbons from malonyl-ACP. Catalyzes the first condensation reaction which initiates fatty acid synthesis and may therefore play a role in governing the total rate of fatty acid production. Possesses both acetoacetyl-ACP synthase and acetyl transacylase activities. Its substrate specificity determines the biosynthesis of branched-chain and/or straight-chain of fatty acids. In Paracidovorax citrulli (strain AAC00-1) (Acidovorax citrulli), this protein is Beta-ketoacyl-[acyl-carrier-protein] synthase III.